The following is an 817-amino-acid chain: MQNWDTATNNNSNNNKSPALTMQQTAANSNNFLEHNTWYNQMFAANIKQEPGTINPHHQHPQQHSSMMASQPQHSPLTHSANHLENYLKQHAHNGGGAHHLQFSDNSGAMTPSPNTNVGGQDFGFESNTSSALNPSLQQHQLYQQHFQQAQQAAAQNQVSSHLPLGFNPLTPPGLPNAVLPAMNHYYSQQQQQQQQRQLQQTPSPSACLSDAHEKSSALTPRHTPPMDITPPKSPKTTVQAMDHQQHPEDQDLISNSSEDLKYIAESEDDESIRMPIYNSHGKMKNHKCKSCGMVAITKMAFWEHARTHMKPEKILQCPKCPFVTELKHHLEYHIRKHKNLKPFQCDKCSYSCVNKSMLNSHRKSHSSVYQYRCADCDYATKYCHSFKLHLRKYEHKPGMVLDEEGIPNPSVVIDVYGTRRGPKNKSAANAALKKACSDLKIPPTSQLSAALQGFPLQQQQQPQQPASPAKSSSSVASELPALTLNMSLQQNLAQQQQQQQQSPGAQSHSSQQQINNLLPPLASLLQQNRNMAFFPYWNLNLQMLAAQQQAAVLAQLSPRMREQLQQQQQNKQANENGEEDEEDNDEVDEDEEEFDGKSVDSAMDLSQGTPTKEEQQTPELAMNLKLSEEHGETPLFSSSAAARRKGRVLKLDQEKTAGHLQIASAPTSPQHHLHHNNEMPPTTSSPIHPSQVNGVAAGAADHSSADESMETGHHHHHHNPTTANTSASSTASSSGNSSNSSSTSTSSNSNSSSAGNSPNTTMYECKYCDIFFKDAVLYTIHMGYHSCDDVFKCNMCGEKCDGPVGLFVHMARNAHS.

Disordered regions lie at residues Pro51–Leu77, His93–Ala132, and Tyr187–Asp252. The span at Gln62–Pro76 shows a compositional bias: low complexity. Positions Phe103–Gly119 are enriched in polar residues. Residues Gln189–Gln201 show a composition bias toward low complexity. 4 C2H2-type zinc fingers span residues His287–His309, Leu316–His338, Phe344–His366, and Tyr372–His396. Disordered stretches follow at residues Pro456–Ala477, Gln491–Gln513, Gln564–Pro619, and Ala666–Ser758. Over residues Gln564–Glu576 the composition is skewed to low complexity. The segment covering Asn577–Phe595 has biased composition (acidic residues). Residues Met680 to Asn694 are compositionally biased toward polar residues. Over residues Pro721–Ser758 the composition is skewed to low complexity. C2H2-type zinc fingers lie at residues Tyr764–His786 and Phe792–His816.

It belongs to the hunchback C2H2-type zinc-finger protein family.

It localises to the nucleus. In terms of biological role, gap class segmentation protein that controls development of head structures. The sequence is that of Protein hunchback (hb) from Musca domestica (House fly).